Here is a 115-residue protein sequence, read N- to C-terminus: Promotilin (115 aa).

Positions 1-25 (MLSRKATAILLVVHAAAMLASQTEG) are cleaved as a signal peptide. The tract at residues 43-73 (RYKGQKKSLSVQQRSEEVGPVDPAEPREEKQ) is disordered.

Belongs to the motilin family.

Its subcellular location is the secreted. In terms of biological role, plays an important role in the regulation of interdigestive gastrointestinal motility and indirectly causes rhythmic contraction of duodenal and colonic smooth muscle. The chain is Promotilin (MLN) from Ovis aries (Sheep).